We begin with the raw amino-acid sequence, 1297 residues long: Protein ENHANCED DOWNY MILDEW 2 (1297 aa).

The PHD-type 1; degenerate zinc-finger motif lies at 222–281 (ESVCAICDNGGEILCCEGSCLRSFHATKKDGEDSLCDSLGFNKMQVEAIQKYFCPNCEHK). Cys-237, Cys-241, Cys-275, Cys-278, Cys-285, Cys-288, Cys-306, Cys-311, His-316, Cys-319, Cys-346, and His-349 together coordinate Zn(2+). The PHD-type 2; atypical zinc-finger motif lies at 282–352 (IHQCFICKNL…EYTCPLHKCS (71 aa)). A PHD-type 3; degenerate zinc finger spans residues 351–417 (CSVCENGEVK…RVLIYCQEHE (67 aa)). Residues 445–452 (QRRILESH) carry the Nuclear localization signal 1 motif. Disordered stretches follow at residues 471-547 (CGKA…ARDA) and 562-598 (TQEPNPVKPGRVIPVDSKHNKTDSIASKEPGSEIPTL). The span at 475-487 (SKNSFRSSFPSSK) shows a compositional bias: low complexity. Residues 492–499 (TKKHGLVS) carry the Nuclear localization signal 2 motif. Residues 526 to 547 (KMMEDSREAGKNKLGVKEARDA) are compositionally biased toward basic and acidic residues. 2 consecutive short sequence motifs (nuclear localization signal) follow at residues 610–617 (MKKATEEI) and 979–986 (LKKEGKTK). 2 stretches are compositionally biased toward basic and acidic residues: residues 969–990 (QSDHLSRRSQLKKEGKTKDYSG) and 1096–1109 (EVSRDRPSSVRTSR). Disordered regions lie at residues 969-1017 (QSDH…GELS), 1085-1109 (HGCKVQGTGKPEVSRDRPSSVRTSR), and 1260-1297 (FPLPPPPPSDFEMSPRGFAPGPNPNYPYMSRSGGWIND).

As to quaternary structure, interacts with WNK8 in nucleus; this interaction is involved in developmental processes regulation but not in RPP7-dependent disease resistance. Interacts with EML1 and EML2 in nucleus. Component of the ASI1-AIPP1-EDM2 (AAE) RNA regulatory complex composed of at least AIPP1/EDM3, ASI1 and EDM2 and may contain CPL2, AIPP2 and AIPP3/BDT1. Binds directly to AIPP1/EDM3. Co-associates with AIPP1/EDM3 to histone H3 lysine 9 dimethylation (H3K9me2)-marked chromatin and transcripts at a critical proximal polyadenylation site of RPP7 to hamper proximal transcript polyadeylation/termination. In terms of processing, phosphorylated by WNK8.

The protein localises to the nucleus. Functionally, cellular antisilencing factor and regulator of genome DNA methylation patterns involved in the regulation of chromatin states. Together with SUVH4, monitors repressive epigenetic marks H3K27me1, H3K9me2, and prevents DNA-methylation at CHG sites, affecting especially the expression of transposons and developmentally important genes. Collaboratively with ASI1 and AIPP1/EDM3, the AAE complex regulates alternative RNA processing (e.g. alternative splicing) and epigenetic silencing (e.g. H3K9me2) of intronic heterochromatin-containing genes as well as genic heterochromatin-containing genes by promoting distal 3' polyadenylation. Epigenetic reader that binds DNA and contributes to transcriptional transposable element (TE) silencing by modulating levels of the repressive post-translational histone modifications (PHM) H3K9me2. In cv. Columbia, required for RPP7-dependent disease resistance against the Hyaloperonospora arabidopsidis isolate Hiks1, by promoting levels of RPP7 via alternative polyadenylation (APA), resulting from cooption of epigenetic information at the TE insertion locus COPIA-R7. Exhibits a global role in NLR (nucleotide-binding, leucine-rich repeat) defense genes epigenetic (e.g. H3K9me2 hallmarks) expression control; promotes the accumulation of RPP7, RPP4 and some other proteins, but mediates the repression of several other NLR products, probably to compensate for fitness penalties caused by defense mechanisms. Regulates development processes such as the formation of leaf pavement cells, leaf expansion, fertility and flowering. Prevents FLC accumulation to control flowering. Modulates stomatal development by regulating the methylation-mediated silencing of ERECTA receptor genes (e.g. ER, ERL1 and ERL2) and preventing cell divisions. The polypeptide is Protein ENHANCED DOWNY MILDEW 2 (Arabidopsis thaliana (Mouse-ear cress)).